The sequence spans 652 residues: DNA ligase (652 aa).

NAD(+)-binding positions include 30–34 (DEVYD), 79–80 (SL), and Glu108. Lys110 (N6-AMP-lysine intermediate) is an active-site residue. NAD(+) is bound by residues Arg131, Glu165, Lys280, and Lys304. Residues Cys398, Cys401, Cys414, and Cys419 each contribute to the Zn(2+) site. The 79-residue stretch at 574–652 (AKENPFKGKS…DEMRSKIEQA (79 aa)) folds into the BRCT domain.

Belongs to the NAD-dependent DNA ligase family. LigA subfamily. It depends on Mg(2+) as a cofactor. Mn(2+) serves as cofactor.

It catalyses the reaction NAD(+) + (deoxyribonucleotide)n-3'-hydroxyl + 5'-phospho-(deoxyribonucleotide)m = (deoxyribonucleotide)n+m + AMP + beta-nicotinamide D-nucleotide.. Functionally, DNA ligase that catalyzes the formation of phosphodiester linkages between 5'-phosphoryl and 3'-hydroxyl groups in double-stranded DNA using NAD as a coenzyme and as the energy source for the reaction. It is essential for DNA replication and repair of damaged DNA. This is DNA ligase from Sulfurimonas denitrificans (strain ATCC 33889 / DSM 1251) (Thiomicrospira denitrificans (strain ATCC 33889 / DSM 1251)).